Consider the following 570-residue polypeptide: Acetolactate synthase (570 aa).

Glutamate 60 is a thiamine diphosphate binding site. FAD is bound by residues glutamine 162, 266-287 (FRNQPGDLLLEQADVVLTIGYD), and 308-327 (DEIIADIDHAYQPDLELIGD). The tract at residues 399–479 (SHAIWMSRYF…IVHIVWNDST (81 aa)) is thiamine pyrophosphate binding. Residue aspartate 450 participates in Mg(2+) binding.

The protein belongs to the TPP enzyme family. It depends on Mg(2+) as a cofactor. Thiamine diphosphate serves as cofactor.

It catalyses the reaction 2 pyruvate + H(+) = (2S)-2-acetolactate + CO2. It functions in the pathway polyol metabolism; (R,R)-butane-2,3-diol biosynthesis; (R,R)-butane-2,3-diol from pyruvate: step 1/3. The sequence is that of Acetolactate synthase (alsS) from Bacillus subtilis (strain 168).